The primary structure comprises 178 residues: Interleukin-10 (178 aa).

A signal peptide spans Met-1 to Ala-18. 2 disulfide bridges follow: Cys-30–Cys-126 and Cys-80–Cys-132. N-linked (GlcNAc...) asparagine glycosylation occurs at Asn-134.

The protein belongs to the IL-10 family. Homodimer. Interacts with IL10RA and IL10RB.

Its subcellular location is the secreted. Functionally, major immune regulatory cytokine that acts on many cells of the immune system where it has profound anti-inflammatory functions, limiting excessive tissue disruption caused by inflammation. Mechanistically, IL10 binds to its heterotetrameric receptor comprising IL10RA and IL10RB leading to JAK1 and STAT2-mediated phosphorylation of STAT3. In turn, STAT3 translocates to the nucleus where it drives expression of anti-inflammatory mediators. Targets antigen-presenting cells (APCs) such as macrophages and monocytes and inhibits their release of pro-inflammatory cytokines including granulocyte-macrophage colony-stimulating factor /GM-CSF, granulocyte colony-stimulating factor/G-CSF, IL-1 alpha, IL-1 beta, IL-6, IL-8 and TNF-alpha. Also interferes with antigen presentation by reducing the expression of MHC-class II and co-stimulatory molecules, thereby inhibiting their ability to induce T cell activation. In addition, controls the inflammatory response of macrophages by reprogramming essential metabolic pathways including mTOR signaling. This chain is Interleukin-10 (IL10), found in Macaca nemestrina (Pig-tailed macaque).